The sequence spans 582 residues: Potassium-transporting ATPase potassium-binding subunit (582 aa).

Helical transmembrane passes span 6-26, 65-85, 87-107, 136-156, 178-198, 277-297, 304-324, 402-422, 441-461, 505-525, and 546-566; these read LVQL…LGLY, IYAL…YVLE, LQGG…FVAV, GLAV…VALI, VLYI…WQGV, LEML…GVMI, LAIL…TLAA, GLYG…LMVG, ALVI…AAVI, IAGA…VLAL, and GGIF…LTFV.

The protein belongs to the KdpA family. In terms of assembly, the system is composed of three essential subunits: KdpA, KdpB and KdpC.

Its subcellular location is the cell inner membrane. Its function is as follows. Part of the high-affinity ATP-driven potassium transport (or Kdp) system, which catalyzes the hydrolysis of ATP coupled with the electrogenic transport of potassium into the cytoplasm. This subunit binds the periplasmic potassium ions and delivers the ions to the membrane domain of KdpB through an intramembrane tunnel. The polypeptide is Potassium-transporting ATPase potassium-binding subunit (Solidesulfovibrio magneticus (strain ATCC 700980 / DSM 13731 / RS-1) (Desulfovibrio magneticus)).